A 517-amino-acid chain; its full sequence is Bifunctional purine biosynthesis protein PurH (517 aa).

One can recognise an MGS-like domain in the interval 1 to 146; the sequence is MGRLVLLSVS…KNFAHLTVLC (146 aa).

This sequence belongs to the PurH family.

The enzyme catalyses (6R)-10-formyltetrahydrofolate + 5-amino-1-(5-phospho-beta-D-ribosyl)imidazole-4-carboxamide = 5-formamido-1-(5-phospho-D-ribosyl)imidazole-4-carboxamide + (6S)-5,6,7,8-tetrahydrofolate. It carries out the reaction IMP + H2O = 5-formamido-1-(5-phospho-D-ribosyl)imidazole-4-carboxamide. It participates in purine metabolism; IMP biosynthesis via de novo pathway; 5-formamido-1-(5-phospho-D-ribosyl)imidazole-4-carboxamide from 5-amino-1-(5-phospho-D-ribosyl)imidazole-4-carboxamide (10-formyl THF route): step 1/1. It functions in the pathway purine metabolism; IMP biosynthesis via de novo pathway; IMP from 5-formamido-1-(5-phospho-D-ribosyl)imidazole-4-carboxamide: step 1/1. The protein is Bifunctional purine biosynthesis protein PurH of Gloeothece citriformis (strain PCC 7424) (Cyanothece sp. (strain PCC 7424)).